Reading from the N-terminus, the 390-residue chain is Putative glutamate--cysteine ligase 2 (390 aa).

It belongs to the glutamate--cysteine ligase type 2 family. YbdK subfamily.

It catalyses the reaction L-cysteine + L-glutamate + ATP = gamma-L-glutamyl-L-cysteine + ADP + phosphate + H(+). Functionally, ATP-dependent carboxylate-amine ligase which exhibits weak glutamate--cysteine ligase activity. This Chloroflexus aurantiacus (strain ATCC 29366 / DSM 635 / J-10-fl) protein is Putative glutamate--cysteine ligase 2.